Reading from the N-terminus, the 237-residue chain is N-(5'-phosphoribosyl)anthranilate isomerase (237 aa).

This sequence belongs to the TrpF family.

The enzyme catalyses N-(5-phospho-beta-D-ribosyl)anthranilate = 1-(2-carboxyphenylamino)-1-deoxy-D-ribulose 5-phosphate. It functions in the pathway amino-acid biosynthesis; L-tryptophan biosynthesis; L-tryptophan from chorismate: step 3/5. This chain is N-(5'-phosphoribosyl)anthranilate isomerase, found in Desulfitobacterium hafniense (strain DSM 10664 / DCB-2).